The primary structure comprises 109 residues: Nucleoid-associated protein Ping_2276 (109 aa).

The protein belongs to the YbaB/EbfC family. As to quaternary structure, homodimer.

The protein localises to the cytoplasm. It localises to the nucleoid. In terms of biological role, binds to DNA and alters its conformation. May be involved in regulation of gene expression, nucleoid organization and DNA protection. The protein is Nucleoid-associated protein Ping_2276 of Psychromonas ingrahamii (strain DSM 17664 / CCUG 51855 / 37).